A 179-amino-acid polypeptide reads, in one-letter code: Diphosphoinositol polyphosphate phosphohydrolase 2 (179 aa).

Residues Arg9, 17-19, and 38-40 contribute to the substrate site; these read KKR and SSR. The 127-residue stretch at 17–143 folds into the Nudix hydrolase domain; it reads KKRAACLCFR…VHAEYLEKLK (127 aa). Mg(2+) contacts are provided by Gly49 and Glu65. The Nudix box motif lies at 50–71; sequence GGMEPEEEPGGAAVREVYEEAG. Glu68 functions as the Proton acceptor in the catalytic mechanism. Mg(2+) is bound at residue Glu69. Residues 88–90, Arg114, and Lys132 each bind substrate; that span reads RKH.

It belongs to the Nudix hydrolase family. DIPP subfamily. The cofactor is Mg(2+). It depends on Mn(2+) as a cofactor.

Its subcellular location is the cytoplasm. The enzyme catalyses diphospho-myo-inositol polyphosphate + H2O = myo-inositol polyphosphate + phosphate.. The catalysed reaction is 5-diphospho-1D-myo-inositol 1,2,3,4,6-pentakisphosphate + H2O = 1D-myo-inositol hexakisphosphate + phosphate + H(+). It carries out the reaction 3,5-bis(diphospho)-1D-myo-inositol 1,2,4,6-tetrakisphosphate + H2O = 3-diphospho-1D-myo-inositol 1,2,4,5,6-pentakisphosphate + phosphate + 2 H(+). It catalyses the reaction 5-diphospho-1D-myo-inositol 1,3,4,6-tetrakisphosphate + H2O = 1D-myo-inositol 1,3,4,5,6-pentakisphosphate + phosphate + H(+). The enzyme catalyses P(1),P(6)-bis(5'-adenosyl) hexaphosphate + H2O = 2 ATP + 2 H(+). The catalysed reaction is P(1),P(5)-bis(5'-adenosyl) pentaphosphate + H2O = ADP + ATP + 2 H(+). It carries out the reaction 5-phospho-alpha-D-ribose 1-diphosphate + H2O = alpha-D-ribose 1,5-bisphosphate + phosphate + H(+). Its function is as follows. Cleaves the beta-phosphate from diphosphoinositol polyphosphates such as PP-InsP5 (diphosphoinositol pentakisphosphate), PP-InsP4 (diphosphoinositol tetrakisphosphate) and [PP]2-InsP4 (bisdiphosphoinositol tetrakisphosphate), suggesting that it may play a role in signal transduction. Diadenosine polyphosphates, particularly Ap6A (P(1),P(6)-bis(5a-adenosyl) hexaphosphate) and Ap5A (P(1),P(5)-bis(5'-adenosyl) pentaphosphate) are downstream effectors of a signaling cascade that regulates cardiac KATP channels, can also be substrates, although with lower preference than the diphosphoinositol polyphosphates. Can also catalyze the hydrolysis of 5-phosphoribose 1-diphosphate, generating the glycolytic activator ribose 1,5-bisphosphate. Does not play a role in U8 snoRNA decapping activity. Binds U8 snoRNA. This is Diphosphoinositol polyphosphate phosphohydrolase 2 from Mus musculus (Mouse).